Consider the following 171-residue polypeptide: Disulfide bond formation protein B (171 aa).

Residues 1–10 (MQRLLTYRAL) lie on the Cytoplasmic side of the membrane. The helical transmembrane segment at 11–27 (NFILFIASVVAMLFAII) threads the bilayer. Residues 28-46 (FLQNYKGLEPCPLCIFQRI) lie on the Periplasmic side of the membrane. A disulfide bond links Cys-38 and Cys-41. Residues 47-63 (GLMVMGGFSLIAAVGHP) form a helical membrane-spanning segment. The Cytoplasmic segment spans residues 64-70 (KKMGMQL). Residues 71-88 (LLWIGSMAGILWSAGVAA) traverse the membrane as a helical segment. Residues 89 to 145 (RHVWIQHLPADQVPACGPGLDYFLEALPMKQVINQVLSGSGECAEISWRFLGLSIPE) are Periplasmic-facing. Cys-104 and Cys-131 are joined by a disulfide. The chain crosses the membrane as a helical span at residues 146–164 (QALILFTALILVNLLVLWR). At 165–171 (IISKRTA) the chain is on the cytoplasmic side.

Belongs to the DsbB family.

The protein resides in the cell inner membrane. Its function is as follows. Required for disulfide bond formation in some periplasmic proteins. Acts by oxidizing the DsbA protein. The polypeptide is Disulfide bond formation protein B (Psychrobacter sp. (strain PRwf-1)).